Consider the following 234-residue polypeptide: Adenosine 5'-phosphosulfate reductase (234 aa).

Positions 120, 121, 203, and 206 each coordinate [4Fe-4S] cluster. Catalysis depends on C229, which acts as the Nucleophile; cysteine thiosulfonate intermediate.

The protein belongs to the PAPS reductase family. CysH subfamily. It depends on [4Fe-4S] cluster as a cofactor.

The protein resides in the cytoplasm. The enzyme catalyses [thioredoxin]-disulfide + sulfite + AMP + 2 H(+) = adenosine 5'-phosphosulfate + [thioredoxin]-dithiol. It participates in sulfur metabolism; hydrogen sulfide biosynthesis; sulfite from sulfate. Functionally, catalyzes the formation of sulfite from adenosine 5'-phosphosulfate (APS) using thioredoxin as an electron donor. This chain is Adenosine 5'-phosphosulfate reductase, found in Bacillus cereus (strain Q1).